Here is a 281-residue protein sequence, read N- to C-terminus: Plasmanylethanolamine desaturase (281 aa).

The Cytoplasmic segment spans residues 1-28 (MKTQEIEKKVRQQDAQVLAQGYSPAIRA). Residues 29–45 (MEIAAIVSFVSLEVALV) traverse the membrane as a helical segment. At 46-58 (YRLWGTPYAGTWL) the chain is on the periplasmic side. The chain crosses the membrane as a helical span at residues 59-75 (LLSAVLLGYLAADFVSG). At 76-123 (FVHWMGDTWGSTEMPVLGKALIRPFREHHVDEKAITRHDFVETNGNNC) the chain is on the cytoplasmic side. A helical membrane pass occupies residues 124 to 138 (LISLPVAIIALCLPM). Residues 139–142 (SGPG) lie on the Periplasmic side of the membrane. Residues 143 to 159 (WVFCASFLGAMIFWVMA) traverse the membrane as a helical segment. Topologically, residues 160–281 (TNQFHKWSHM…VQEKPASTRP (122 aa)) are cytoplasmic. Positions 164–168 (HKWSH) match the Histidine box-1 motif. Positions 191 to 195 (HRIHH) match the Histidine box-2 motif.

Belongs to the fatty acid desaturase CarF family. As to quaternary structure, interacts with CarR.

It is found in the cell inner membrane. It carries out the reaction a 1-(1,2-saturated alkyl)-2-acyl-sn-glycero-3-phosphoethanolamine + 2 Fe(II)-[cytochrome b5] + O2 + 2 H(+) = a 1-O-(1Z-alkenyl)-2-acyl-sn-glycero-3-phosphoethanolamine + 2 Fe(III)-[cytochrome b5] + 2 H2O. It catalyses the reaction 1-O-(13-methyltetradecyl)-2-(13-methyltetradecanoyl)-sn-glycero-3-phosphoethanolamine + 2 Fe(II)-[cytochrome b5] + O2 + 2 H(+) = 1-O-(1Z-13-methyltetradecenyl)-2-(13-methyltetradecanoyl)-sn-glycero-3-phosphoethanolamine + 2 Fe(III)-[cytochrome b5] + 2 H2O. Plasmanylethanolamine desaturase involved in plasmalogen biogenesis in the membrane, required for light-induced carotenogenesis. Plasmalogens are glycerophospholipids with a hydrocarbon chain linked by a vinyl ether bond at the glycerol sn-1 position, and are involved in antioxidative and signaling mechanisms, most precisely in sensing photooxidative stress through singlet oxygen. Participates in the light-dependent inactivation of the antisigma factor CarR. Mediates signaling by singlet oxygen, generated via photoexcited protoporphyrin IX. The chain is Plasmanylethanolamine desaturase from Myxococcus xanthus.